The chain runs to 241 residues: Pyridoxal phosphate phosphatase PHOSPHO2 (241 aa).

The active-site Nucleophile is the Asp-8. Residues Asp-8 and Asp-10 each coordinate Mg(2+). Asp-10 acts as the Proton donor in catalysis. Substrate-binding residues include Asp-19 and Asp-99. Residue Asp-179 participates in Mg(2+) binding.

This sequence belongs to the HAD-like hydrolase superfamily. PHOSPHO family. Mg(2+) is required as a cofactor.

The catalysed reaction is pyridoxal 5'-phosphate + H2O = pyridoxal + phosphate. Phosphatase that has high activity toward pyridoxal 5'-phosphate (PLP). Also active at much lower level toward pyrophosphate, phosphoethanolamine (PEA), phosphocholine (PCho), phospho-l-tyrosine, fructose-6-phosphate, p-nitrophenyl phosphate, and h-glycerophosphate. This Bos taurus (Bovine) protein is Pyridoxal phosphate phosphatase PHOSPHO2 (PHOSPHO2).